We begin with the raw amino-acid sequence, 113 residues long: 14 kDa zinc-binding protein (113 aa).

The 111-residue stretch at 3–113 (IFGKIISKEI…GGRQMNWPPG (111 aa)) folds into the HIT domain. The Histidine triad motif motif lies at 97–101 (HIHVH).

In terms of assembly, homodimer.

This chain is 14 kDa zinc-binding protein, found in Brassica juncea (Indian mustard).